The sequence spans 447 residues: Glucose-6-phosphate isomerase (447 aa).

Glutamate 288 (proton donor) is an active-site residue. Residues histidine 309 and lysine 423 contribute to the active site.

Belongs to the GPI family.

The protein localises to the cytoplasm. The enzyme catalyses alpha-D-glucose 6-phosphate = beta-D-fructose 6-phosphate. It functions in the pathway carbohydrate biosynthesis; gluconeogenesis. Its pathway is carbohydrate degradation; glycolysis; D-glyceraldehyde 3-phosphate and glycerone phosphate from D-glucose: step 2/4. Its function is as follows. Catalyzes the reversible isomerization of glucose-6-phosphate to fructose-6-phosphate. The polypeptide is Glucose-6-phosphate isomerase (Lactobacillus gasseri (strain ATCC 33323 / DSM 20243 / BCRC 14619 / CIP 102991 / JCM 1131 / KCTC 3163 / NCIMB 11718 / NCTC 13722 / AM63)).